We begin with the raw amino-acid sequence, 260 residues long: Imidazole glycerol phosphate synthase subunit HisF (260 aa).

Active-site residues include Asp-12 and Asp-131.

Belongs to the HisA/HisF family. As to quaternary structure, heterodimer of HisH and HisF.

Its subcellular location is the cytoplasm. It carries out the reaction 5-[(5-phospho-1-deoxy-D-ribulos-1-ylimino)methylamino]-1-(5-phospho-beta-D-ribosyl)imidazole-4-carboxamide + L-glutamine = D-erythro-1-(imidazol-4-yl)glycerol 3-phosphate + 5-amino-1-(5-phospho-beta-D-ribosyl)imidazole-4-carboxamide + L-glutamate + H(+). It functions in the pathway amino-acid biosynthesis; L-histidine biosynthesis; L-histidine from 5-phospho-alpha-D-ribose 1-diphosphate: step 5/9. IGPS catalyzes the conversion of PRFAR and glutamine to IGP, AICAR and glutamate. The HisF subunit catalyzes the cyclization activity that produces IGP and AICAR from PRFAR using the ammonia provided by the HisH subunit. In Corynebacterium jeikeium (strain K411), this protein is Imidazole glycerol phosphate synthase subunit HisF.